Reading from the N-terminus, the 96-residue chain is Protein Vpr (96 aa).

Residues 1-42 (MEQAPEDQGPQREPYNEWTLELLEELKSEAVRHFPRIWLHSL) are homooligomerization. Phosphoserine; by host is present on residues S79, S94, and S96.

Belongs to the HIV-1 VPR protein family. As to quaternary structure, homooligomer, may form homodimer. Interacts with p6-gag region of the Pr55 Gag precursor protein through a (Leu-X-X)4 motif near the C-terminus of the P6gag protein. Interacts with host UNG. May interact with host RAD23A/HHR23A. Interacts with host VPRBP/DCAF1, leading to hijack the CUL4A-RBX1-DDB1-DCAF1/VPRBP complex, mediating ubiquitination of host proteins such as TERT and ZGPAT and arrest of the cell cycle in G2 phase. Phosphorylated on several residues by host. These phosphorylations regulate VPR activity for the nuclear import of the HIV-1 pre-integration complex.

It is found in the virion. The protein resides in the host nucleus. The protein localises to the host extracellular space. During virus replication, may deplete host UNG protein, and incude G2-M cell cycle arrest. Acts by targeting specific host proteins for degradation by the 26S proteasome, through association with the cellular CUL4A-DDB1 E3 ligase complex by direct interaction with host VPRPB/DCAF-1. Cell cycle arrest reportedly occurs within hours of infection and is not blocked by antiviral agents, suggesting that it is initiated by the VPR carried into the virion. Additionally, VPR induces apoptosis in a cell cycle dependent manner suggesting that these two effects are mechanistically linked. Detected in the serum and cerebrospinal fluid of AIDS patient, VPR may also induce cell death to bystander cells. In terms of biological role, during virus entry, plays a role in the transport of the viral pre-integration (PIC) complex to the host nucleus. This function is crucial for viral infection of non-dividing macrophages. May act directly at the nuclear pore complex, by binding nucleoporins phenylalanine-glycine (FG)-repeat regions. The sequence is that of Protein Vpr from Human immunodeficiency virus type 1 group M subtype D (isolate Z2/CDC-Z34) (HIV-1).